We begin with the raw amino-acid sequence, 62 residues long: Beta-defensin 33 (62 aa).

A signal peptide spans 1–20; it reads MRLLFLLFILLVCLAQTTSG. 3 cysteine pairs are disulfide-bonded: cysteine 30-cysteine 59, cysteine 37-cysteine 52, and cysteine 45-cysteine 60.

This sequence belongs to the beta-defensin family.

It is found in the secreted. Has antibacterial activity. In Mus musculus (Mouse), this protein is Beta-defensin 33 (Defb33).